Consider the following 141-residue polypeptide: uncharacterized protein (141 aa).

Residues 1–101 (FRGRAPRPLV…PDPGRSRRAT (101 aa)) are disordered. Basic and acidic residues predominate over residues 27–70 (QVRDCGREGDLRAGKAADRRLPRARETCSRFGEGVRQKDVHKGP).

This is an uncharacterized protein from Dhori virus (strain Indian/1313/61) (Dho).